The sequence spans 211 residues: Interleukin-6 (211 aa).

The first 25 residues, 1 to 25 (MNSLSTSTFSPVAFSLGLLLVMATA), serve as a signal peptide directing secretion. Cys71 and Cys77 are oxidised to a cystine. Ser80 bears the Phosphoserine mark. Residues Cys100 and Cys110 are joined by a disulfide bond.

It belongs to the IL-6 superfamily. In terms of assembly, component of a hexamer of two molecules each of IL6, IL6R and IL6ST; first binds to IL6R to associate with the signaling subunit IL6ST. Interacts with IL6R (via the N-terminal ectodomain); this interaction may be affected by IL6R-binding with SORL1, hence decreasing IL6 cis signaling. Interacts with SORL1 (via the N-terminal ectodomain); this interaction leads to IL6 internalization and lysosomal degradation. May form a trimeric complex with the soluble SORL1 ectodomain and soluble IL6R receptor; this interaction might stabilize circulating IL6, hence promoting IL6 trans signaling.

Its subcellular location is the secreted. Its function is as follows. Cytokine with a wide variety of biological functions in immunity, tissue regeneration, and metabolism. Binds to IL6R, then the complex associates to the signaling subunit IL6ST/gp130 to trigger the intracellular IL6-signaling pathway. The interaction with the membrane-bound IL6R and IL6ST stimulates 'classic signaling', whereas the binding of IL6 and soluble IL6R to IL6ST stimulates 'trans-signaling'. Alternatively, 'cluster signaling' occurs when membrane-bound IL6:IL6R complexes on transmitter cells activate IL6ST receptors on neighboring receiver cells. Functionally, IL6 is a potent inducer of the acute phase response. Rapid production of IL6 contributes to host defense during infection and tissue injury, but excessive IL6 synthesis is involved in disease pathology. In the innate immune response, is synthesized by myeloid cells, such as macrophages and dendritic cells, upon recognition of pathogens through toll-like receptors (TLRs) at the site of infection or tissue injury. In the adaptive immune response, is required for the differentiation of B cells into immunoglobulin-secreting cells. Plays a major role in the differentiation of CD4(+) T cell subsets. Essential factor for the development of T follicular helper (Tfh) cells that are required for the induction of germinal-center formation. Required to drive naive CD4(+) T cells to the Th17 lineage. Also required for proliferation of myeloma cells and the survival of plasmablast cells. Acts as an essential factor in bone homeostasis and on vessels directly or indirectly by induction of VEGF, resulting in increased angiogenesis activity and vascular permeability. Induces, through 'trans-signaling' and synergistically with IL1B and TNF, the production of VEGF. Involved in metabolic controls, is discharged into the bloodstream after muscle contraction increasing lipolysis and improving insulin resistance. 'Trans-signaling' in central nervous system also regulates energy and glucose homeostasis. Mediates, through GLP-1, crosstalk between insulin-sensitive tissues, intestinal L cells and pancreatic islets to adapt to changes in insulin demand. Also acts as a myokine. Plays a protective role during liver injury, being required for maintenance of tissue regeneration. Also has a pivotal role in iron metabolism by regulating HAMP/hepcidin expression upon inflammation or bacterial infection. Through activation of IL6ST-YAP-NOTCH pathway, induces inflammation-induced epithelial regeneration. The protein is Interleukin-6 (IL6) of Lama glama (Llama).